The sequence spans 1681 residues: MEGNETANLCSKSVGWLQKQDKDVEPWLWKLSNCFSTLTQSLPSAGGNPKDYMEHPKPKVELKDVPPPPPPVKPCKNIFPTVPLPKIQPPALPAVQHQTGPKVSCCVLCSNSTSCAPEIRCSGGGYIHPNTILDTGTVTCQVAPGLSFAPESPFKKASSTSTFVPRSAGFSNLCLENRLSPCQCHSQPAPCYSKVHLNPFHGDHPRFQVPALGTSPSYFTSGLSQHVENHLAQSEYLSHYCTSSLHFNTPSSAFLKGPHFCNVCFEKPSSSKVTDSHKIWPNIPPPNTSSAPIPICNGCGTQETVKEAALILAKNLCKASQKYGSPDLATGQMQENLPPIGVFWDIENCSVPSGRSAVTVVKRIRERLFKGHREAEFICVCDISKENKEVIEELNNCQVTVAHINATAKNAADDKLRQSLRRFADTHTSPATVVLVSTDVNFALELSDLRHRHSFHIILIHKNQASEALLHHAHELIHFEEFISDLPPRLPIKMQQCQTLLYVYNLPTNRDAKSISNRLRRLSDNCGGKVMSISGTSAILRFANQESAERAQKRMENEDVFGNRITVSFTPRNKEVNETKNSCVSNEKAKSPKKVNKNTKLCLSIKDDSSSNTKAASKSACGSVSKNSNVKSLKELCQMQSKSNKTSQQEKDKKRNGDKQGTLSQSSPLCTNQMLQTARNVGTDNTASKSFQKRDDTTRKSNADSQKEQKNKEDVVFQISNPSAFSKLTESRQASPFCSSQSGWSSRSLSPSLSNCSSPIATNQTGAADNSVDPFANGADIQIGNLDYRMSRKELQQTLHDIFSRHGKIKNVELSPHTDYQLKATVQMENLQEAICAVNSLHRYKIGSKRIQVSLATGATNKSLSLLSFGTVSILQDAPACCLPLFKFTEIYEKKFGHKLIVSDLYRLTDTVTIRDQGNGRLVCLLPSVQARQSPMGSSQSHDGSSANCSPVVFEELEYHEPICRRHCSNRKFSGHDFDPDSYIIPFVIISLKTFAPQVHSLLQTHEGTVPLLSFPDCYAAEFSALKEVQEGQGGVPLEHLITCIPGVNIAFAQNGIKVVKWIHNKPPPPNSDPWLLRSKSPVGNPQLIQFSREVIDLLKNQPSCIMPVTKFIPTYHHHFAKQCRVSDYGYSKLLELLEAVPHVLQILGMGSKRLLTLTHRAQVKRFTQDLLKLLKSQASKQVIVREFSQAYHWCFSRDWNVTEYGVCDLVDIVSEIPDTTICVSQQDGESVISIPKRERTPEEVERTKQFSKEVVDLLRHQPHFRMPFNKFIPSYHHHFGRQCKLTYYGFTKLLDLFEAIPDVLQVLECGEEKILALTEMERIKALASQLVKLLRSQKDSSINMPDLLTEYSKTFGYSLRLHDYDVSSVPALMQKLCHVVKIMDTDLGKQIQLINRKSLRSLTAQLLILLMSWDESSSLTVEQLCQVYQSVHGIPLNPCEYGFVSLAELLKSLPYLVEVHTNDLCEDSVQLTSLYVFAKNVRSLLHTYHYQQIFLHEFPNAYSKYVGEVLQPKQYGYSSLEEILGAIPQVVWIKGHGHKRIVVLKNDMKVCHQMDKELLCLTSPMDLLCGPVPSCLPSPQLHPDPVVTQPADLIQFEEHFHFSDLVYPEETQYNPLCNGTQPCNFPTSADLDTFSEPSTQNICPQESKSTKELPESPVKRQHRNRVKLAANFSFAPVTKL.

The NYN domain occupies 340-477 (IGVFWDIENC…ALLHHAHELI (138 aa)). 2 disordered regions span residues 576–595 (VNETKNSCVSNEKAKSPKKV) and 638–717 (QMQS…DVVF). The span at 638–647 (QMQSKSNKTS) shows a compositional bias: polar residues. Over residues 648–658 (QQEKDKKRNGD) the composition is skewed to basic and acidic residues. Residues 659–690 (KQGTLSQSSPLCTNQMLQTARNVGTDNTASKS) are compositionally biased toward polar residues. Residues 692 to 715 (QKRDDTTRKSNADSQKEQKNKEDV) show a composition bias toward basic and acidic residues. An RRM domain is found at 779 to 858 (ADIQIGNLDY…KRIQVSLATG (80 aa)). HTH OST-type domains follow at residues 863–937 (SLSL…SPMG), 991–1067 (SLKT…HNKP), 1087–1161 (QLIQ…LTHR), 1163–1238 (QVKR…IPKR), 1247–1321 (RTKQ…LTEM), 1323–1398 (RIKA…INRK), 1399–1472 (SLRS…SVQL), and 1474–1548 (SLYV…LKND). Residues 1637 to 1648 (EPSTQNICPQES) show a composition bias toward polar residues. The interval 1637–1662 (EPSTQNICPQESKSTKELPESPVKRQ) is disordered. Over residues 1649-1659 (KSTKELPESPV) the composition is skewed to basic and acidic residues.

It localises to the peroxisome. Its function is as follows. Essential regulator of oogenesis required for female meiotic progression to repress transposable elements and preventing their mobilization, which is essential for the germline integrity. This chain is Meiosis regulator and mRNA stability factor 1, found in Xenopus tropicalis (Western clawed frog).